The sequence spans 1400 residues: DNA topoisomerase 2 (1400 aa).

Positions 1 to 30 (MSSFESDSASDAESAFSDASSDFTPSSSVK) are enriched in low complexity. The segment at 1 to 57 (MSSFESDSASDAESAFSDASSDFTPSSSVKSKGKVPLRDSTNTTAQPSAPATGDASD) is disordered. Over residues 39–57 (DSTNTTAQPSAPATGDASD) the composition is skewed to polar residues. ATP is bound by residues Asn-117, Asn-146, 174–176 (SSN), and 187–194 (GRNGYGAK). The interval 379–386 (TKKEKGKK) is interaction with DNA. 415 to 417 (QTK) contacts ATP. The 117-residue stretch at 497 to 613 (CTLILTEGDS…GLLEIPGFLL (117 aa)) folds into the Toprim domain. Mg(2+) contacts are provided by Glu-503, Asp-582, and Asp-584. The Topo IIA-type catalytic domain maps to 749–1214 (IPSILDGFKP…SAKDLWNSDL (466 aa)). The active-site O-(5'-phospho-DNA)-tyrosine intermediate is Tyr-839. The tract at residues 1019–1028 (KLISSISLSN) is interaction with DNA. The interval 1235-1400 (FGPTAKTSTR…NESDEDYMSE (166 aa)) is disordered. The segment covering 1262–1271 (SSTPKASTPT) has biased composition (low complexity). Over residues 1312–1321 (PKRKTPKSKP) the composition is skewed to basic residues. The segment covering 1389–1400 (DGNESDEDYMSE) has biased composition (acidic residues).

Belongs to the type II topoisomerase family. As to quaternary structure, homodimer. Requires Mg(2+) as cofactor. Mn(2+) serves as cofactor. Ca(2+) is required as a cofactor.

The protein localises to the nucleus. It carries out the reaction ATP-dependent breakage, passage and rejoining of double-stranded DNA.. Functionally, control of topological states of DNA by transient breakage and subsequent rejoining of DNA strands. Topoisomerase II makes double-strand breaks. The protein is DNA topoisomerase 2 (TOP2) of Meyerozyma guilliermondii (strain ATCC 6260 / CBS 566 / DSM 6381 / JCM 1539 / NBRC 10279 / NRRL Y-324) (Yeast).